The following is a 427-amino-acid chain: Enolase (427 aa).

Glutamine 163 is a binding site for (2R)-2-phosphoglycerate. Glutamate 205 acts as the Proton donor in catalysis. Mg(2+) is bound by residues aspartate 242, glutamate 285, and aspartate 312. The (2R)-2-phosphoglycerate site is built by lysine 337, arginine 366, serine 367, and lysine 388. Lysine 337 serves as the catalytic Proton acceptor.

It belongs to the enolase family. The cofactor is Mg(2+).

It is found in the cytoplasm. Its subcellular location is the secreted. The protein resides in the cell surface. The catalysed reaction is (2R)-2-phosphoglycerate = phosphoenolpyruvate + H2O. It participates in carbohydrate degradation; glycolysis; pyruvate from D-glyceraldehyde 3-phosphate: step 4/5. In terms of biological role, catalyzes the reversible conversion of 2-phosphoglycerate (2-PG) into phosphoenolpyruvate (PEP). It is essential for the degradation of carbohydrates via glycolysis. The protein is Enolase of Paraburkholderia phytofirmans (strain DSM 17436 / LMG 22146 / PsJN) (Burkholderia phytofirmans).